A 122-amino-acid polypeptide reads, in one-letter code: Small ribosomal subunit protein uS13 (122 aa).

Residues 95-122 (GLPVRGQRTKTNARTRKGPKKTIAGKKK) are disordered.

This sequence belongs to the universal ribosomal protein uS13 family. As to quaternary structure, part of the 30S ribosomal subunit. Forms a loose heterodimer with protein S19. Forms two bridges to the 50S subunit in the 70S ribosome.

Located at the top of the head of the 30S subunit, it contacts several helices of the 16S rRNA. In the 70S ribosome it contacts the 23S rRNA (bridge B1a) and protein L5 of the 50S subunit (bridge B1b), connecting the 2 subunits; these bridges are implicated in subunit movement. Contacts the tRNAs in the A and P-sites. The protein is Small ribosomal subunit protein uS13 of Corynebacterium aurimucosum (strain ATCC 700975 / DSM 44827 / CIP 107346 / CN-1) (Corynebacterium nigricans).